A 109-amino-acid polypeptide reads, in one-letter code: Thioredoxin-like protein slr1139 (109 aa).

Residues 2-107 enclose the Thioredoxin domain; it reads SLLEITDAEF…LLELLKEELD (106 aa). The cysteines at positions 31 and 34 are disulfide-linked.

The protein belongs to the thioredoxin family.

The chain is Thioredoxin-like protein slr1139 from Synechocystis sp. (strain ATCC 27184 / PCC 6803 / Kazusa).